The following is a 541-amino-acid chain: 2-succinyl-5-enolpyruvyl-6-hydroxy-3-cyclohexene-1-carboxylate synthase (541 aa).

This sequence belongs to the TPP enzyme family. MenD subfamily. Homodimer. Mg(2+) serves as cofactor. Mn(2+) is required as a cofactor. Requires thiamine diphosphate as cofactor.

The catalysed reaction is isochorismate + 2-oxoglutarate + H(+) = 5-enolpyruvoyl-6-hydroxy-2-succinyl-cyclohex-3-ene-1-carboxylate + CO2. Its pathway is quinol/quinone metabolism; 1,4-dihydroxy-2-naphthoate biosynthesis; 1,4-dihydroxy-2-naphthoate from chorismate: step 2/7. It participates in quinol/quinone metabolism; menaquinone biosynthesis. Its function is as follows. Catalyzes the thiamine diphosphate-dependent decarboxylation of 2-oxoglutarate and the subsequent addition of the resulting succinic semialdehyde-thiamine pyrophosphate anion to isochorismate to yield 2-succinyl-5-enolpyruvyl-6-hydroxy-3-cyclohexene-1-carboxylate (SEPHCHC). This chain is 2-succinyl-5-enolpyruvyl-6-hydroxy-3-cyclohexene-1-carboxylate synthase, found in Rhodococcus opacus (strain B4).